Consider the following 574-residue polypeptide: Arginine--tRNA ligase (574 aa).

The short motif at 124–134 is the 'HIGH' region element; it reads ANPNGPLHIGH.

It belongs to the class-I aminoacyl-tRNA synthetase family.

It localises to the cytoplasm. It catalyses the reaction tRNA(Arg) + L-arginine + ATP = L-arginyl-tRNA(Arg) + AMP + diphosphate. The polypeptide is Arginine--tRNA ligase (Methanococcus aeolicus (strain ATCC BAA-1280 / DSM 17508 / OCM 812 / Nankai-3)).